Here is a 477-residue protein sequence, read N- to C-terminus: Asparaginyl-tRNA synthetase (477 aa).

A mitochondrion-targeting transit peptide spans 1 to 14 (MLGARRLLGALRLC). Lys353 carries the N6-acetyllysine modification.

The protein belongs to the class-II aminoacyl-tRNA synthetase family. As to quaternary structure, homodimer. In terms of tissue distribution, expressed in brain and inner ear, including the cochlear epithelium and organ of Corti.

The protein localises to the mitochondrion matrix. It localises to the mitochondrion. It carries out the reaction tRNA(Asn) + L-asparagine + ATP = L-asparaginyl-tRNA(Asn) + AMP + diphosphate + H(+). Mitochondrial aminoacyl-tRNA synthetase that catalyzes the specific attachment of the asparagine amino acid (aa) to the homologous transfer RNA (tRNA), further participating in protein synthesis. The reaction occurs in a two steps: asparagine is first activated by ATP to form Asn-AMP and then transferred to the acceptor end of tRNA(Asn). The sequence is that of Asparaginyl-tRNA synthetase from Mus musculus (Mouse).